Consider the following 248-residue polypeptide: Probable transcriptional regulatory protein trd_1132 (248 aa).

This sequence belongs to the TACO1 family.

It is found in the cytoplasm. This chain is Probable transcriptional regulatory protein trd_1132, found in Thermomicrobium roseum (strain ATCC 27502 / DSM 5159 / P-2).